Consider the following 4574-residue polypeptide: E3 ubiquitin-protein ligase MYCBP2 (4574 aa).

Disordered regions lie at residues 92–115 (RGKK…VKTR) and 599–620 (SASK…PYKP). 4 RCC1 repeats span residues 591–646 (DGSV…IVTK), 690–746 (SGEV…MMCQ), 943–993 (NGDV…VLLM), and 995–1051 (GQVF…LRID). Residues 611-620 (SRRQPKPYKP) are compositionally biased toward basic residues. A disulfide bridge links cysteine 1733 with cysteine 1850. Disordered regions lie at residues 1976 to 1998 (APPT…EQGL) and 2313 to 2332 (LQRL…LTFG). Polar residues-rich tracts occupy residues 1981–1998 (NPNQ…EQGL) and 2317–2328 (PGTSSNSATGTD). One copy of the Filamin repeat lies at 2336-2417 (APKLEATYEP…IHVTIDGIEI (82 aa)). Disordered stretches follow at residues 2613 to 2824 (GFDY…PSPH), 2845 to 2922 (SNDE…KQAM), 3085 to 3116 (SPGS…KAEV), 3345 to 3365 (PGSN…TDSD), and 3505 to 3526 (FETE…EQEK). Basic and acidic residues-rich tracts occupy residues 2639-2663 (HRQE…KSKN) and 2678-2688 (DTGKLRSDSHS). The span at 2716–2729 (NPGSRSSSPKQKTF) shows a compositional bias: polar residues. Residues 2730 to 2745 (TSGRSSPSSTSSPRSS) are compositionally biased toward low complexity. Basic and acidic residues-rich tracts occupy residues 2761-2772 (VHLDPPRERSKS), 2854-2864 (SELHNAEEGSS), and 2874-2883 (PVKEELESRS). 2 stretches are compositionally biased toward basic residues: residues 2887–2900 (VSRK…RPKK) and 3102–3111 (KKTKKEKKKK). The segment covering 3515-3526 (NKGNKENLEQEK) has biased composition (basic and acidic residues). The DOC domain occupies 3617–3795 (FNISVQSGYE…SVAQQKNCEA (179 aa)). A disordered region spans residues 3815-3841 (GDAEPTPEQEEKNLLSSPEGEDKAPSD). Positions 4324, 4327, 4342, 4344, 4347, 4350, 4371, 4374, 4440, and 4443 each coordinate Zn(2+). The segment at 4324–4375 (CMICFTEALSAAPAIQLDCSHVFHLQCTRRVLENRWLGPRITFGFMSCPICK) adopts an RING-type; atypical zinc-finger fold. The interval 4435–4572 (YAYYVCFKCK…LGCGVCRNAH (138 aa)) is tandem cysteine domain. Cysteine 4454 is an active-site residue. 7 residues coordinate Zn(2+): cysteine 4471, cysteine 4474, cysteine 4483, histidine 4486, cysteine 4495, cysteine 4498, and cysteine 4499. Cysteine 4506 is an active-site residue. Cysteine 4513, cysteine 4516, cysteine 4534, cysteine 4548, histidine 4554, cysteine 4565, and cysteine 4568 together coordinate Zn(2+).

The protein belongs to the RING-Cys relay (RCR) family. In terms of tissue distribution, widely expressed when the visual system begins developing. In the eye, expressed in all cells, including retinal ganglion cells, with no obvious gradient.

The protein resides in the nucleus. It is found in the cell projection. Its subcellular location is the axon. The protein localises to the cytoplasm. It localises to the cytoskeleton. It catalyses the reaction [E2 ubiquitin-conjugating enzyme]-S-ubiquitinyl-L-cysteine + [acceptor protein]-L-threonine = [E2 ubiquitin-conjugating enzyme]-L-cysteine + [acceptor protein]-3-O-ubiquitinyl-L-threonine.. The protein operates within protein modification; protein ubiquitination. In terms of biological role, atypical E3 ubiquitin-protein ligase which specifically mediates ubiquitination of threonine and serine residues on target proteins, instead of ubiquitinating lysine residues. Shows esterification activity towards both threonine and serine, with a preference for threonine, and acts via two essential catalytic cysteine residues that relay ubiquitin to its substrate via thioester intermediates. Interacts with the E2 enzymes UBE2D1, UBE2D3, UBE2E1 and UBE2L3. Plays a key role in neural development, probably by mediating ubiquitination of threonine residues on target proteins. Involved in different processes such as regulation of neurite outgrowth, synaptic growth, synaptogenesis and axon degeneration. Required in the visual system for correct fasciculation, targeting and mapping of retinal axons. Acts as a regulator of pteridine synthesis. May play a role in the regulation of the circadian clock gene expression. This is E3 ubiquitin-protein ligase MYCBP2 from Danio rerio (Zebrafish).